Here is a 144-residue protein sequence, read N- to C-terminus: Grifin (144 aa).

The Galectin domain maps to 5–133; that stretch reads SKAFCAGGLA…DHCLAQVELA (129 aa). Ser138 is subject to Phosphoserine.

As to quaternary structure, homodimer. Not detected in lens.

The chain is Grifin (GRIFIN) from Homo sapiens (Human).